The sequence spans 118 residues: Phosphoribosyl-AMP cyclohydrolase (118 aa).

Asp-87 contacts Mg(2+). Cys-88 contacts Zn(2+). Positions 89 and 91 each coordinate Mg(2+). 2 residues coordinate Zn(2+): Cys-104 and Cys-111.

The protein belongs to the PRA-CH family. As to quaternary structure, homodimer. It depends on Mg(2+) as a cofactor. Zn(2+) is required as a cofactor.

The protein localises to the cytoplasm. The catalysed reaction is 1-(5-phospho-beta-D-ribosyl)-5'-AMP + H2O = 1-(5-phospho-beta-D-ribosyl)-5-[(5-phospho-beta-D-ribosylamino)methylideneamino]imidazole-4-carboxamide. It participates in amino-acid biosynthesis; L-histidine biosynthesis; L-histidine from 5-phospho-alpha-D-ribose 1-diphosphate: step 3/9. Functionally, catalyzes the hydrolysis of the adenine ring of phosphoribosyl-AMP. The protein is Phosphoribosyl-AMP cyclohydrolase of Corynebacterium glutamicum (strain R).